The sequence spans 658 residues: Translin-associated factor X-interacting protein 1 (658 aa).

2 coiled-coil regions span residues 144–184 and 230–295; these read EISL…AEEY and ALKM…LMQL.

As to quaternary structure, interacts with TSNAX.

It is found in the cytoplasm. The protein resides in the perinuclear region. Possible role in spermatogenesis. The chain is Translin-associated factor X-interacting protein 1 from Homo sapiens (Human).